The sequence spans 257 residues: Zinc transporter ZupT (257 aa).

A run of 8 helical transmembrane segments spans residues 5–25 (LILT…GVLG), 33–53 (LAFS…MEML), 61–81 (GMSP…YFGL), 109–129 (AILL…ATFV), 137–157 (LGFG…LAVA), 171–191 (IFWA…AWLI), 195–215 (LVSP…MVAL), and 236–256 (GVLC…TIGI). N120 and E123 together coordinate Fe(2+). Zn(2+) contacts are provided by E123 and H148. 3 residues coordinate Fe(2+): N149, E152, and E181. Residue E152 coordinates Zn(2+).

This sequence belongs to the ZIP transporter (TC 2.A.5) family. ZupT subfamily.

It is found in the cell inner membrane. It catalyses the reaction Zn(2+)(in) = Zn(2+)(out). In terms of biological role, mediates zinc uptake. May also transport other divalent cations. In Salmonella paratyphi A (strain ATCC 9150 / SARB42), this protein is Zinc transporter ZupT.